Here is a 395-residue protein sequence, read N- to C-terminus: MNNMPTIKHVRAFTVRGGGADYHDQGSGHWIDDHISTPMGRYPEYRQSRQSFGINVLGTLVVEIEASDGTVGFSVTTGGELGCWIVEKHLARFIEGAKVTDIEKIWDQMFNATLYYGRKGIVLNTISGVDLALWDLLAKVRKEPVHALLGGPVRDELTFYATGARPDLAKKMGFIGGKLPLHHGPAEREEGLKKNLELLGEMRQRVGDDFWLMYDCWMSLDVEYATRLANAASEYKLKWIEEALPPDDYWGYAELRRNVPRGMLVTTGEHEATRWGFRMLLEMECCDILQPDVGWCGGITELLKISALADAHGKLVVPHGSSVYSYHFVITRHNSPFSEFLMMAPKADEVVPMFNPMLLDEPVPVNGRMKASALDAPGFGVRLNPECALQRPFPR.

Substrate-binding residues include H23 and R49. Positions 215, 241, and 269 each coordinate Mg(2+). Catalysis depends on H319, which acts as the Proton acceptor. E339 is a substrate binding site.

Belongs to the mandelate racemase/muconate lactonizing enzyme family. RhamD subfamily. In terms of assembly, homooctamer; tetramer of dimers. Mg(2+) is required as a cofactor.

The catalysed reaction is L-rhamnonate = 2-dehydro-3-deoxy-L-rhamnonate + H2O. Its function is as follows. Catalyzes the dehydration of L-rhamnonate to 2-keto-3-deoxy-L-rhamnonate (KDR). This Polaromonas sp. (strain JS666 / ATCC BAA-500) protein is L-rhamnonate dehydratase (rhmD).